We begin with the raw amino-acid sequence, 365 residues long: UDP-N-acetylglucosamine--N-acetylmuramyl-(pentapeptide) pyrophosphoryl-undecaprenol N-acetylglucosamine transferase (365 aa).

UDP-N-acetyl-alpha-D-glucosamine is bound by residues 12 to 14 (TGG), N128, R169, S195, and Q296.

Belongs to the glycosyltransferase 28 family. MurG subfamily.

The protein resides in the cell inner membrane. It carries out the reaction di-trans,octa-cis-undecaprenyl diphospho-N-acetyl-alpha-D-muramoyl-L-alanyl-D-glutamyl-meso-2,6-diaminopimeloyl-D-alanyl-D-alanine + UDP-N-acetyl-alpha-D-glucosamine = di-trans,octa-cis-undecaprenyl diphospho-[N-acetyl-alpha-D-glucosaminyl-(1-&gt;4)]-N-acetyl-alpha-D-muramoyl-L-alanyl-D-glutamyl-meso-2,6-diaminopimeloyl-D-alanyl-D-alanine + UDP + H(+). It functions in the pathway cell wall biogenesis; peptidoglycan biosynthesis. Its function is as follows. Cell wall formation. Catalyzes the transfer of a GlcNAc subunit on undecaprenyl-pyrophosphoryl-MurNAc-pentapeptide (lipid intermediate I) to form undecaprenyl-pyrophosphoryl-MurNAc-(pentapeptide)GlcNAc (lipid intermediate II). The sequence is that of UDP-N-acetylglucosamine--N-acetylmuramyl-(pentapeptide) pyrophosphoryl-undecaprenol N-acetylglucosamine transferase from Gluconobacter oxydans (strain 621H) (Gluconobacter suboxydans).